The sequence spans 377 residues: All-trans-retinol dehydrogenase [NAD(+)] ADH4 (377 aa).

Zn(2+) is bound at residue Cys-47. 48–49 (PT) is an NAD(+) binding site. The Zn(2+) site is built by His-68, Cys-98, Cys-101, Cys-104, Cys-112, and Cys-179. NAD(+)-binding positions include 204–209 (GLGCVG), Asp-228, Lys-233, 297–299 (VGA), 320–322 (TFF), and Arg-372.

It belongs to the zinc-containing alcohol dehydrogenase family. Class-II subfamily. Dimer. Requires Zn(2+) as cofactor. In terms of tissue distribution, liver specific.

The protein localises to the cytoplasm. The catalysed reaction is all-trans-retinol + NAD(+) = all-trans-retinal + NADH + H(+). It carries out the reaction 9-cis-retinol + NAD(+) = 9-cis-retinal + NADH + H(+). It catalyses the reaction 20-oxo-(5Z,8Z,11Z,14Z)-eicosatetraenoate + NAD(+) + H2O = (5Z,8Z,11Z,14Z)-eicosatetraenedioate + NADH + 2 H(+). The enzyme catalyses 20-hydroxy-(5Z,8Z,11Z,14Z)-eicosatetraenoate + NAD(+) = 20-oxo-(5Z,8Z,11Z,14Z)-eicosatetraenoate + NADH + H(+). The catalysed reaction is 1,4-benzoquinone + NADH + H(+) = hydroquinone + NAD(+). With respect to regulation, oxidation of 20-HETE is inhibited by low concentrations of N-heptylformamide. Oxidation of 20-HETE is a decreased by 55-65% by either all-trans-retinol or all-trans-retinoic acid. Strongly inhibited by omega-hydroxy fatty acids. Catalyzes the NAD-dependent oxidation of either all-trans-retinol or 9-cis-retinol. Also oxidizes long chain omega-hydroxy fatty acids, such as 20-HETE, producing both the intermediate aldehyde, 20-oxoarachidonate and the end product, a dicarboxylic acid, (5Z,8Z,11Z,14Z)-eicosatetraenedioate. Also catalyzes the reduction of benzoquinones. This chain is All-trans-retinol dehydrogenase [NAD(+)] ADH4, found in Rattus norvegicus (Rat).